The primary structure comprises 405 residues: 4-hydroxy-3-methylbut-2-en-1-yl diphosphate synthase (flavodoxin) (405 aa).

Cys297, Cys300, Cys343, and Glu350 together coordinate [4Fe-4S] cluster.

Belongs to the IspG family. It depends on [4Fe-4S] cluster as a cofactor.

The catalysed reaction is (2E)-4-hydroxy-3-methylbut-2-enyl diphosphate + oxidized [flavodoxin] + H2O + 2 H(+) = 2-C-methyl-D-erythritol 2,4-cyclic diphosphate + reduced [flavodoxin]. The protein operates within isoprenoid biosynthesis; isopentenyl diphosphate biosynthesis via DXP pathway; isopentenyl diphosphate from 1-deoxy-D-xylulose 5-phosphate: step 5/6. In terms of biological role, converts 2C-methyl-D-erythritol 2,4-cyclodiphosphate (ME-2,4cPP) into 1-hydroxy-2-methyl-2-(E)-butenyl 4-diphosphate. This is 4-hydroxy-3-methylbut-2-en-1-yl diphosphate synthase (flavodoxin) from Francisella tularensis subsp. novicida (strain U112).